A 426-amino-acid chain; its full sequence is MNILLQDPFAVLKEHPEKLTHTIENPLRTECLQFSPCGDYLALGCANGALVIYDMDTFRPICVPGNMLGAHVRPITSIAWSPDGRLLLTSSRDWSIKLWDLSKPSKPLKEIRFDSPIWGCQWLDAKRRLCVATIFEESDAYVIDFSNDPVASLLSKSDEKQLSSTPDHGYVLVCTVHTKHPNIIIVGTSKGWLDFYKFHSLYQTECIHSLKITSSNIKHLIVSQNGERLAINCSDRTIRQYEISIDDENSAVELTLEHKYQDVINKLQWNCILFSNNTAEYLVASTHGSSAHELYIWETTSGTLVRVLEGAEEELIDINWDFYSMSIVSNGFESGNVYVWSVVIPPKWSALAPDFEEVEENVDYLEKEDEFDEVDEAEQQQGLEQEEEIAIDLRTREQYDVRGNNLLVERFTIPTDYTRIIKMQSS.

WD repeat units lie at residues 24 to 63, 70 to 109, 212 to 251, 264 to 307, and 310 to 350; these read ENPL…PICV, AHVR…KPLK, ITSS…ENSA, INKL…LVRV, and GAEE…KWSA. Residues Arg236 and Lys266 each contribute to the DNA site.

In terms of assembly, component of the Set1C/COMPASS complex which consists of SET1(2), BRE2(2), SPP1(2), SDC1(1), SHG1(1), SWD1(1), SWD2(1), and SWD3(1).

It is found in the nucleus. The protein resides in the chromosome. Its subcellular location is the telomere. Component of the Set1C/COMPASS complex that specifically mono-, di- and trimethylates histone H3 to form H3K4me1/2/3, which subsequently plays a role in telomere length maintenance and transcription elongation regulation. COMPASS recognizes ubiquitinated H2B on one face of the nucleosome which stimulates the methylation of H3 on the opposing face. SWD1/CPS50 acts as an assembly and regulatory hub for COMPASS complex formation. Serves as a highly utilized surface for COMPASS interaction with the nucleosome. In Saccharomyces cerevisiae (strain ATCC 204508 / S288c) (Baker's yeast), this protein is COMPASS component SWD1.